A 329-amino-acid polypeptide reads, in one-letter code: Prostaglandin reductase 1 (329 aa).

Phosphothreonine is present on Thr-18. Ser-20 carries the post-translational modification Phosphoserine. NADP(+) contacts are provided by residues 152 to 155, Lys-178, Tyr-193, Asn-217, 239 to 245, 270 to 272, and Asn-321; these read GAVG, CGAISQY, and FIV. At Lys-178 the chain carries N6-(2-hydroxyisobutyryl)lysine; alternate. N6-acetyllysine; alternate is present on Lys-178.

It belongs to the NADP-dependent oxidoreductase L4BD family. Monomer or homodimer.

The protein resides in the cytoplasm. The enzyme catalyses 13,14-dihydro-15-oxo-prostaglandin E1 + NADP(+) = 15-oxoprostaglandin E1 + NADPH + H(+). It carries out the reaction 13,14-dihydro-15-oxo-prostaglandin E2 + NADP(+) = 15-oxoprostaglandin E2 + NADPH + H(+). It catalyses the reaction 13,14-dihydro-15-oxo-prostaglandin F1alpha + NADP(+) = 15-oxoprostaglandin F1alpha + NADPH + H(+). The catalysed reaction is 13,14-dihydro-15-oxo-PGF2alpha + NADP(+) = 15-oxoprostaglandin F2alpha + NADPH + H(+). The enzyme catalyses leukotriene B4 + NADP(+) = 12-oxo-leukotriene B4 + NADPH + H(+). It carries out the reaction 20-hydroxy-leukotriene B4 + NADP(+) = 12-oxo-20-hydroxy-leukotriene B4 + NADPH + H(+). It catalyses the reaction 6-trans-leukotriene B4 + NADP(+) = 12-oxo-(5S)-hydroxy-(6E,8E,10E,14Z)-eicosatetraenoate + NADPH + H(+). The catalysed reaction is (5S,12S)-dihydroxy-(6E,10E,12E,14Z)-eicosatetraenoate + NADP(+) = 12-oxo-(5S)-hydroxy-(6E,8E,10E,14Z)-eicosatetraenoate + NADPH + H(+). The enzyme catalyses an n-alkanal + NADP(+) = an alk-2-enal + NADPH + H(+). It carries out the reaction hexanal + NADP(+) = (E)-hex-2-enal + NADPH + H(+). It catalyses the reaction octanal + NADP(+) = (2E)-octenal + NADPH + H(+). The catalysed reaction is decanal + NADP(+) = (2E)-decenal + NADPH + H(+). The enzyme catalyses dodecanal + NADP(+) = (2E)-dodecenal + NADPH + H(+). It carries out the reaction 4-hydroxynonanal + NADP(+) = (E)-4-hydroxynon-2-enal + NADPH + H(+). It catalyses the reaction pentan-2-one + NADP(+) = (E)-pent-3-en-2-one + NADPH + H(+). The catalysed reaction is nonan-2-one + NADP(+) = (3E)-nonen-2-one + NADPH + H(+). Its function is as follows. NAD(P)H-dependent oxidoreductase involved in metabolic inactivation of pro- and anti-inflammatory eicosanoids: prostaglandins (PG), leukotrienes (LT) and lipoxins (LX). Catalyzes with high efficiency the reduction of the 13,14 double bond of 15-oxoPGs, including 15-oxo-PGE1, 15-oxo-PGE2, 15-oxo-PGF1-alpha and 15-oxo-PGF2-alpha. Catalyzes with lower efficiency the oxidation of the hydroxyl group at C12 of LTB4 and its derivatives, converting them into biologically less active 12-oxo-LTB4 metabolites. Reduces 15-oxo-LXA4 to 13,14 dihydro-15-oxo-LXA4, enhancing neutrophil recruitment at the inflammatory site. Plays a role in metabolic detoxification of alkenals and ketones. Reduces alpha,beta-unsaturated alkenals and ketones, particularly those with medium-chain length, showing highest affinity toward (2E)-decenal and (3E)-3-nonen-2-one. Inactivates 4-hydroxy-2-nonenal, a cytotoxic lipid constituent of oxidized low-density lipoprotein particles. This chain is Prostaglandin reductase 1 (Ptgr1), found in Rattus norvegicus (Rat).